A 164-amino-acid polypeptide reads, in one-letter code: Phosphopantetheine adenylyltransferase (164 aa).

Ser-10 serves as a coordination point for substrate. Residues 10–11 (SF) and His-18 each bind ATP. Substrate contacts are provided by Lys-42, Leu-74, and Arg-88. Residues 89 to 91 (GLR), Glu-99, and 124 to 130 (YAFLSSS) each bind ATP.

This sequence belongs to the bacterial CoaD family. As to quaternary structure, homohexamer. The cofactor is Mg(2+).

The protein resides in the cytoplasm. It carries out the reaction (R)-4'-phosphopantetheine + ATP + H(+) = 3'-dephospho-CoA + diphosphate. It functions in the pathway cofactor biosynthesis; coenzyme A biosynthesis; CoA from (R)-pantothenate: step 4/5. In terms of biological role, reversibly transfers an adenylyl group from ATP to 4'-phosphopantetheine, yielding dephospho-CoA (dPCoA) and pyrophosphate. This chain is Phosphopantetheine adenylyltransferase, found in Geobacillus thermodenitrificans (strain NG80-2).